We begin with the raw amino-acid sequence, 263 residues long: Chymotrypsinogen B2 (263 aa).

An N-terminal signal peptide occupies residues Met1–Gly18. Cystine bridges form between Cys19-Cys140, Cys60-Cys76, Cys154-Cys219, Cys186-Cys200, and Cys209-Cys238. Residues Ile34–Ala261 enclose the Peptidase S1 domain. Catalysis depends on charge relay system residues His75 and Asp120. Residue Ser213 is the Charge relay system of the active site.

This sequence belongs to the peptidase S1 family.

It localises to the secreted. The protein resides in the extracellular space. The enzyme catalyses Preferential cleavage: Tyr-|-Xaa, Trp-|-Xaa, Phe-|-Xaa, Leu-|-Xaa.. The polypeptide is Chymotrypsinogen B2 (CTRB2) (Homo sapiens (Human)).